An 891-amino-acid polypeptide reads, in one-letter code: DNA mismatch repair protein MutS (891 aa).

646–653 (GPNMAGKS) serves as a coordination point for ATP.

Belongs to the DNA mismatch repair MutS family.

In terms of biological role, this protein is involved in the repair of mismatches in DNA. It is possible that it carries out the mismatch recognition step. This protein has a weak ATPase activity. This is DNA mismatch repair protein MutS from Rickettsia canadensis (strain McKiel).